Consider the following 79-residue polypeptide: Small serum protein 3 (79 aa).

Residues 1–19 (MKVFFILIIFSFTLATCQG) form the signal peptide. 3 cysteine pairs are disulfide-bonded: cysteine 21–cysteine 72, cysteine 39–cysteine 64, and cysteine 62–cysteine 71.

The protein localises to the secreted. Shows an slight inhibitory effect toward the metalloproteinase brevilysin H6, but does not inhibit the metalloproteinases thermolysin, HR1A and HR1B. In Protobothrops flavoviridis (Habu), this protein is Small serum protein 3.